A 148-amino-acid polypeptide reads, in one-letter code: Cuticle protein CP1499 (148 aa).

In terms of tissue distribution, calcified shell.

The chain is Cuticle protein CP1499 from Cancer pagurus (Rock crab).